We begin with the raw amino-acid sequence, 223 residues long: Probable 3-beta-hydroxysteroid-Delta(8),Delta(7)-isomerase (223 aa).

Helical transmembrane passes span 28–48 (IVSI…LLFG), 58–78 (LMCW…YFVF), 115–135 (VEGI…YAIA), and 175–195 (FYYY…PSLI). The region spanning 54 to 196 (LDKLLMCWWT…WWVLIPSLIS (143 aa)) is the EXPERA domain.

Belongs to the EBP family.

The protein resides in the endoplasmic reticulum membrane. The enzyme catalyses lathosterol = 5alpha-cholest-8-en-3beta-ol. It participates in steroid biosynthesis; sterol biosynthesis. Its function is as follows. Catalyzes the conversion of Delta(8)-sterols to their corresponding Delta(7)-isomers. This is Probable 3-beta-hydroxysteroid-Delta(8),Delta(7)-isomerase from Arabidopsis thaliana (Mouse-ear cress).